A 418-amino-acid chain; its full sequence is UDP-glucuronic acid decarboxylase 1 (418 aa).

Over 1–17 (MMRMSWMVTVINRRMMK) the chain is Cytoplasmic. A helical; Signal-anchor for type II membrane protein membrane pass occupies residues 18 to 38 (ILIALALIAYIASVWGTYANM). The Lumenal segment spans residues 39 to 418 (RSIQEHGEMK…RMKKGRPRHN (380 aa)). The NAD(+) site is built by glycine 96, phenylalanine 97, valine 98, aspartate 117, asparagine 118, phenylalanine 120, threonine 121, glycine 122, aspartate 142, and valine 143. Positions 147 and 148 each coordinate UDP-alpha-D-glucuronate. 2 residues coordinate NAD(+): leucine 157 and serine 159. A UDP-alpha-D-glucuronate-binding site is contributed by lysine 175. Threonine 176 contributes to the NAD(+) binding site. Residues asparagine 183, glycine 186, lysine 189, and arginine 190 each contribute to the UDP-alpha-D-glucuronate site. Alanine 198, tyrosine 229, and lysine 233 together coordinate NAD(+). Tyrosine 229 acts as the Proton acceptor in catalysis. The UDP-alpha-D-glucuronate site is built by tyrosine 243, glutamine 246, and glutamate 247. NAD(+) contacts are provided by threonine 259, histidine 265, and arginine 270. N-linked (GlcNAc...) asparagine glycosylation is found at asparagine 314 and asparagine 383. Positions 397–418 (ANNQYIPKPKAARMKKGRPRHN) are disordered. Residues 406 to 418 (KAARMKKGRPRHN) are compositionally biased toward basic residues.

It belongs to the NAD(P)-dependent epimerase/dehydratase family. UDP-glucuronic acid decarboxylase subfamily. As to quaternary structure, homodimer and homotetramer. The cofactor is NAD(+).

Its subcellular location is the golgi apparatus. The protein resides in the golgi stack membrane. It carries out the reaction UDP-alpha-D-glucuronate + H(+) = UDP-alpha-D-xylose + CO2. It participates in nucleotide-sugar biosynthesis; UDP-alpha-D-xylose biosynthesis; UDP-alpha-D-xylose from UDP-alpha-D-glucuronate: step 1/1. In terms of biological role, catalyzes the NAD-dependent decarboxylation of UDP-glucuronic acid to UDP-xylose. Necessary for the biosynthesis of the core tetrasaccharide in glycosaminoglycan biosynthesis. Essential during embryogenesis for craniofacial development. This chain is UDP-glucuronic acid decarboxylase 1, found in Danio rerio (Zebrafish).